Reading from the N-terminus, the 739-residue chain is TonB-dependent heme receptor A (739 aa).

Positions Met1–Ala22 are cleaved as a signal peptide. Residues Gly38–Lys150 enclose the TBDR plug domain. The TBDR beta-barrel domain maps to Leu161–Phe739.

Belongs to the TonB-dependent receptor family.

The protein resides in the cell outer membrane. Its function is as follows. Heme receptor. The protein is TonB-dependent heme receptor A (tdhA) of Haemophilus ducreyi (strain 35000HP / ATCC 700724).